The primary structure comprises 50 residues: uncharacterized protein (50 aa).

A disordered region spans residues 1–50; it reads MKTGFWQQVLPKRAGRRKEHPVQYMPHKKEENATGLMNPSLHTSHSAILK. A compositionally biased stretch (polar residues) spans 35–50; the sequence is GLMNPSLHTSHSAILK.

This is an uncharacterized protein from Treponema pallidum (strain Nichols).